The primary structure comprises 65 residues: Large ribosomal subunit protein bL35 (65 aa).

The interval 20-42 (GKVRRHHANASHIMTTKTTKRKR) is disordered.

This sequence belongs to the bacterial ribosomal protein bL35 family.

In Syntrophus aciditrophicus (strain SB), this protein is Large ribosomal subunit protein bL35.